The primary structure comprises 742 residues: Vesicle-fusing ATPase (742 aa).

Residues 499–504 (NGMVDC) and 539–546 (SGSGKTAL) each bind ATP. Threonine 544 serves as a coordination point for Mg(2+).

This sequence belongs to the AAA ATPase family. As to quaternary structure, homohexamer. Binds to SNARE-SNAP complexes to form 20S particles. Mg(2+) serves as cofactor.

It is found in the cytoplasm. It carries out the reaction ATP + H2O = ADP + phosphate + H(+). Required for vesicle-mediated transport. Catalyzes the fusion of transport vesicles within the Golgi cisternae. Is also required for transport from the endoplasmic reticulum to the Golgi stack. Seems to function as a fusion protein required for the delivery of cargo proteins to all compartments of the Golgi stack independent of vesicle origin. Required for maintaining the normal morphology of the Golgi apparatus. This chain is Vesicle-fusing ATPase, found in Arabidopsis thaliana (Mouse-ear cress).